We begin with the raw amino-acid sequence, 611 residues long: DNA mismatch repair protein MutL (611 aa).

Belongs to the DNA mismatch repair MutL/HexB family.

Functionally, this protein is involved in the repair of mismatches in DNA. It is required for dam-dependent methyl-directed DNA mismatch repair. May act as a 'molecular matchmaker', a protein that promotes the formation of a stable complex between two or more DNA-binding proteins in an ATP-dependent manner without itself being part of a final effector complex. In Borreliella afzelii (strain PKo) (Borrelia afzelii), this protein is DNA mismatch repair protein MutL.